Here is a 243-residue protein sequence, read N- to C-terminus: Type III pantothenate kinase (243 aa).

Position 6 to 13 (6 to 13) interacts with ATP; that stretch reads DIGNTVAK. Substrate contacts are provided by residues Tyr86 and 93-96; that span reads GYDR. Catalysis depends on Asp95, which acts as the Proton acceptor. Residue Asp116 participates in K(+) binding. Thr119 serves as a coordination point for ATP. Residue Thr171 participates in substrate binding.

This sequence belongs to the type III pantothenate kinase family. As to quaternary structure, homodimer. Requires NH4(+) as cofactor. It depends on K(+) as a cofactor.

Its subcellular location is the cytoplasm. It catalyses the reaction (R)-pantothenate + ATP = (R)-4'-phosphopantothenate + ADP + H(+). It participates in cofactor biosynthesis; coenzyme A biosynthesis; CoA from (R)-pantothenate: step 1/5. Catalyzes the phosphorylation of pantothenate (Pan), the first step in CoA biosynthesis. The chain is Type III pantothenate kinase from Bacteroides fragilis (strain ATCC 25285 / DSM 2151 / CCUG 4856 / JCM 11019 / LMG 10263 / NCTC 9343 / Onslow / VPI 2553 / EN-2).